Here is a 325-residue protein sequence, read N- to C-terminus: Phosphate import ATP-binding protein PstB (325 aa).

Residues 79-320 enclose the ABC transporter domain; sequence IDNYNLWYSN…PNNEKTKDYI (242 aa). Residue 111-118 coordinates ATP; that stretch reads GPSGCGKS.

This sequence belongs to the ABC transporter superfamily. Phosphate importer (TC 3.A.1.7) family. In terms of assembly, the complex is composed of two ATP-binding proteins (PstB), two transmembrane proteins (PstC and PstA) and a solute-binding protein (PstS).

The protein localises to the cell membrane. The catalysed reaction is phosphate(out) + ATP + H2O = ADP + 2 phosphate(in) + H(+). In terms of biological role, part of the ABC transporter complex PstSACB involved in phosphate import. Responsible for energy coupling to the transport system. The protein is Phosphate import ATP-binding protein PstB of Mycoplasmoides gallisepticum (strain R(low / passage 15 / clone 2)) (Mycoplasma gallisepticum).